A 578-amino-acid chain; its full sequence is Arginine--tRNA ligase (578 aa).

Residues proline 127–histidine 137 carry the 'HIGH' region motif.

This sequence belongs to the class-I aminoacyl-tRNA synthetase family. Monomer.

The protein localises to the cytoplasm. The catalysed reaction is tRNA(Arg) + L-arginine + ATP = L-arginyl-tRNA(Arg) + AMP + diphosphate. This chain is Arginine--tRNA ligase, found in Pseudomonas entomophila (strain L48).